The following is a 237-amino-acid chain: MGTCKYKRVMLKLSGEALAGENGFGIDFNIAMNIAKAVKELVDMGIEVGAVVGGGNIWRGRSGEGMDRTTADYMGMLATSINALALQDSLESLGVDTRVQTAIEMKEIAEPYIRRRAMRHLEKGRVVIFGAGTGNPYFSTDTAAALRAAEIEADVILLAKKVDGVYDKDPHKYDDAKKYDELSYIEVLEQGLQVMDSTATSLCMDNNIPILVFALDNPENIKRVVLGENIGTIVSKK.

Position 12 to 15 (12 to 15) interacts with ATP; sequence KLSG. The involved in allosteric activation by GTP stretch occupies residues 20 to 25; sequence GENGFG. UMP is bound at residue glycine 54. The ATP site is built by glycine 55 and arginine 59. UMP contacts are provided by residues aspartate 72 and 133–140; that span reads TGNPYFST. ATP-binding residues include tyrosine 166 and aspartate 169.

Belongs to the UMP kinase family. In terms of assembly, homohexamer.

It localises to the cytoplasm. The catalysed reaction is UMP + ATP = UDP + ADP. The protein operates within pyrimidine metabolism; CTP biosynthesis via de novo pathway; UDP from UMP (UMPK route): step 1/1. Its activity is regulated as follows. Allosterically activated by GTP. Inhibited by UTP. Catalyzes the reversible phosphorylation of UMP to UDP. This Clostridium perfringens (strain ATCC 13124 / DSM 756 / JCM 1290 / NCIMB 6125 / NCTC 8237 / Type A) protein is Uridylate kinase.